The following is a 94-amino-acid chain: Co-chaperonin GroES (94 aa).

It belongs to the GroES chaperonin family. As to quaternary structure, heptamer of 7 subunits arranged in a ring. Interacts with the chaperonin GroEL.

Its subcellular location is the cytoplasm. Its function is as follows. Together with the chaperonin GroEL, plays an essential role in assisting protein folding. The GroEL-GroES system forms a nano-cage that allows encapsulation of the non-native substrate proteins and provides a physical environment optimized to promote and accelerate protein folding. GroES binds to the apical surface of the GroEL ring, thereby capping the opening of the GroEL channel. This is Co-chaperonin GroES from Clostridium botulinum (strain Alaska E43 / Type E3).